A 330-amino-acid chain; its full sequence is Putative pentatricopeptide repeat-containing protein At5g36300 (330 aa).

PPR repeat units follow at residues 10-44 (SLSMYNSWIRYFCRTGETNEAMSLLAEIHSLGSRP), 45-75 (DPLSYVSFIETLASLRRTLEADALFHEVVRF), 83-113 (VRLYNALVSRYLRKEVSWRVVNEMKKRKFRL), 114-148 (NSFVYGKIIRIYRDNGMWKKALGIVEEIREIGLPM), 149-179 (DVEIYNSVIDTFGKYGELDEELQVLEKLQRS), 185-215 (NIRTWNSLIRWHCHHGAVDMALELFTMIFED), 231-265 (SANLFCTLANAYAQQGLCKQTVKVLKMMENEGIEP), 266-296 (NLIMLNVLINAFGTAGKHMEALSIYHHIKET), and 302-330 (DVVTYSTLMKAFTRAKKYEMVCSFYLVTL).

This sequence belongs to the PPR family. P subfamily.

The protein is Putative pentatricopeptide repeat-containing protein At5g36300 of Arabidopsis thaliana (Mouse-ear cress).